The sequence spans 325 residues: MATH domain and coiled-coil domain-containing protein At3g58340 (325 aa).

One can recognise an MATH domain in the interval 6–131 (DKKFCWEIKN…NGQVMIVAEV (126 aa)). The stretch at 266-315 (KVDWLEKKLDHVKEKKEKEQSGLIILQGIEQQLHELMHKCEKKKSEVLSV) forms a coiled coil.

This chain is MATH domain and coiled-coil domain-containing protein At3g58340, found in Arabidopsis thaliana (Mouse-ear cress).